Here is a 352-residue protein sequence, read N- to C-terminus: MVVDDSAVVRQVLVGVLNEAPGIEVIATAADPLLAIEKMRQQWPDVIVLDVEMPRMDGITFLRKIMSERPTPVVICSTLTEKGARVTMDALAAGAVAVVTKPRLGLKQFLTDSADELVATVRSAARANVKRLAARVTAAPLEAEVKHTADVILPAQTGRALAQTTERIVAIGTSTGGTQALEEVLTALPRVCPGIVIVQHMPEKFTAAFAARLNGLCQIAVKEAANNDRVMPGRALIAPGGKHLLLRRSGAQYFVEVLEGPPVNRHRPSVDVLFRSAARAAGSNALGIIMTGMGDDGAAGLLEMRQAGARTIAQDEHTSIVFGMPKEAIKRGGADRILPLGAMAREIVTQLQ.

The Response regulatory domain maps to 1–116 (MVVDDSAVVR…KQFLTDSADE (116 aa)). Aspartate 50 is modified (4-aspartylphosphate). Residues 162 to 352 (AQTTERIVAI…MAREIVTQLQ (191 aa)) form the CheB-type methylesterase domain. Active-site residues include serine 174, histidine 200, and aspartate 296.

This sequence belongs to the CheB family. Post-translationally, phosphorylated by CheA. Phosphorylation of the N-terminal regulatory domain activates the methylesterase activity.

The protein localises to the cytoplasm. It carries out the reaction [protein]-L-glutamate 5-O-methyl ester + H2O = L-glutamyl-[protein] + methanol + H(+). The catalysed reaction is L-glutaminyl-[protein] + H2O = L-glutamyl-[protein] + NH4(+). Functionally, involved in chemotaxis. Part of a chemotaxis signal transduction system that modulates chemotaxis in response to various stimuli. Catalyzes the demethylation of specific methylglutamate residues introduced into the chemoreceptors (methyl-accepting chemotaxis proteins or MCP) by CheR. Also mediates the irreversible deamidation of specific glutamine residues to glutamic acid. The chain is Protein-glutamate methylesterase/protein-glutamine glutaminase 2 from Xanthomonas campestris pv. campestris (strain ATCC 33913 / DSM 3586 / NCPPB 528 / LMG 568 / P 25).